Reading from the N-terminus, the 144-residue chain is Large ribosomal subunit protein uL16 (144 aa).

The span at 1–19 shows a compositional bias: basic residues; that stretch reads MLLPKRVKYRRQHRPKTTG. The tract at residues 1 to 23 is disordered; it reads MLLPKRVKYRRQHRPKTTGRSKG.

The protein belongs to the universal ribosomal protein uL16 family. In terms of assembly, part of the 50S ribosomal subunit.

In terms of biological role, binds 23S rRNA and is also seen to make contacts with the A and possibly P site tRNAs. In Staphylococcus saprophyticus subsp. saprophyticus (strain ATCC 15305 / DSM 20229 / NCIMB 8711 / NCTC 7292 / S-41), this protein is Large ribosomal subunit protein uL16.